The sequence spans 367 residues: Phospho-N-acetylmuramoyl-pentapeptide-transferase (367 aa).

Helical transmembrane passes span 16-36 (LLLAAAAFVLTLIIGGWWVRF), 62-82 (TMGGIMIVSTVLILTILFNLV), 87-107 (MLLPLGVMVSFAVLGAIDDWL), 125-145 (FWIMMAVAFVASLALYLPQPY), 158-178 (VGEVNIGLWFIPIAVLIIVFI), 190-210 (SLAGWNLTLAFGAYGVITFLA), 214-234 (LTNLMAFCFTVVGACAAFLWY), 240-260 (QVFMGDLGALALGATLAVVAL), 264-284 (QWLLLPVIGIVFVVEALSTMI), and 326-346 (FVLIGTVAAMVGISLALIFGP).

It belongs to the glycosyltransferase 4 family. MraY subfamily. Mg(2+) serves as cofactor.

It localises to the cell membrane. The enzyme catalyses UDP-N-acetyl-alpha-D-muramoyl-L-alanyl-gamma-D-glutamyl-meso-2,6-diaminopimeloyl-D-alanyl-D-alanine + di-trans,octa-cis-undecaprenyl phosphate = di-trans,octa-cis-undecaprenyl diphospho-N-acetyl-alpha-D-muramoyl-L-alanyl-D-glutamyl-meso-2,6-diaminopimeloyl-D-alanyl-D-alanine + UMP. It participates in cell wall biogenesis; peptidoglycan biosynthesis. In terms of biological role, catalyzes the initial step of the lipid cycle reactions in the biosynthesis of the cell wall peptidoglycan: transfers peptidoglycan precursor phospho-MurNAc-pentapeptide from UDP-MurNAc-pentapeptide onto the lipid carrier undecaprenyl phosphate, yielding undecaprenyl-pyrophosphoryl-MurNAc-pentapeptide, known as lipid I. In Chloroflexus aurantiacus (strain ATCC 29366 / DSM 635 / J-10-fl), this protein is Phospho-N-acetylmuramoyl-pentapeptide-transferase.